A 132-amino-acid chain; its full sequence is Fatty acid-binding protein, adipocyte (132 aa).

Cys-2 is modified (N-acetylcysteine). Residue Ser-13 is modified to Phosphoserine. Tyr-20 carries the phosphotyrosine; by Tyr-kinases modification. Residues 22–32 (KEVGVGFATRK) carry the Nuclear localization signal motif. Residue 127-129 (RVY) coordinates a fatty acid.

The protein belongs to the calycin superfamily. Fatty-acid binding protein (FABP) family. In terms of assembly, monomer. Homodimer. Interacts with PPARG.

It localises to the cytoplasm. The protein localises to the nucleus. In terms of biological role, lipid transport protein in adipocytes. Binds both long chain fatty acids and retinoic acid. Delivers long-chain fatty acids and retinoic acid to their cognate receptors in the nucleus. This is Fatty acid-binding protein, adipocyte (Fabp4) from Rattus norvegicus (Rat).